Reading from the N-terminus, the 464-residue chain is Secretion-regulating guanine nucleotide exchange factor (464 aa).

RCC1 repeat units follow at residues 14-66 (AAAL…VVTD), 68-118 (GSLF…ILTE), 119-170 (NGQV…AATA), 172-229 (GTVF…SLTD), 230-282 (AGEL…AQTV), 283-349 (TGKV…LAVI), and 350-401 (GGVC…ALCQ). Positions 301–313 (VETREGWESEKQD) are enriched in basic and acidic residues. A disordered region spans residues 301–323 (VETREGWESEKQDPSLPGSGPQK). Residues 411–464 (HPSVTSPSPDATKEARSQEAMEQERNQKERHAETSPQAQSDRFRNGGLVAETLE) form a disordered region. The segment covering 421-443 (ATKEARSQEAMEQERNQKERHAE) has biased composition (basic and acidic residues). Residue Ser427 is modified to Phosphoserine.

As to quaternary structure, interacts with SEC5. The interaction occurs only in the presence of magnesium or manganese and is stimulated by dCTP or GTP.

Its subcellular location is the cytoplasm. The protein localises to the nucleus. Probable guanine nucleotide exchange factor (GEF), which may be involved in the secretion process. In Bos taurus (Bovine), this protein is Secretion-regulating guanine nucleotide exchange factor (SERGEF).